Reading from the N-terminus, the 123-residue chain is UPF0231 protein PMI2039 (123 aa).

Belongs to the UPF0231 family.

This chain is UPF0231 protein PMI2039, found in Proteus mirabilis (strain HI4320).